The primary structure comprises 154 residues: MNIIEGKLNLDSNTKIAIINARFNHIITDRLVEGAKDAFLRHGGKKENLSLILVPGAFELPYALKKAIESEKFDAICCVGAVIRGSTPHFDYVSAETTKGIANVSLNHNIPVSFGVLTTDTIEQAIERAGSKAGNKGFEAMTTVIEMLNLTKEL.

5-amino-6-(D-ribitylamino)uracil-binding positions include Phe23, 57 to 59, and 81 to 83; these read AFE and AVI. 86–87 contributes to the (2S)-2-hydroxy-3-oxobutyl phosphate binding site; sequence ST. His89 functions as the Proton donor in the catalytic mechanism. Position 114 (Phe114) interacts with 5-amino-6-(D-ribitylamino)uracil. Residue Arg128 coordinates (2S)-2-hydroxy-3-oxobutyl phosphate.

This sequence belongs to the DMRL synthase family.

The enzyme catalyses (2S)-2-hydroxy-3-oxobutyl phosphate + 5-amino-6-(D-ribitylamino)uracil = 6,7-dimethyl-8-(1-D-ribityl)lumazine + phosphate + 2 H2O + H(+). Its pathway is cofactor biosynthesis; riboflavin biosynthesis; riboflavin from 2-hydroxy-3-oxobutyl phosphate and 5-amino-6-(D-ribitylamino)uracil: step 1/2. In terms of biological role, catalyzes the formation of 6,7-dimethyl-8-ribityllumazine by condensation of 5-amino-6-(D-ribitylamino)uracil with 3,4-dihydroxy-2-butanone 4-phosphate. This is the penultimate step in the biosynthesis of riboflavin. This is 6,7-dimethyl-8-ribityllumazine synthase from Campylobacter jejuni subsp. doylei (strain ATCC BAA-1458 / RM4099 / 269.97).